The following is a 332-amino-acid chain: Ribosomal RNA small subunit methyltransferase H (332 aa).

Residues 36-38, aspartate 54, phenylalanine 81, aspartate 102, and glutamine 109 each bind S-adenosyl-L-methionine; that span reads GGY.

This sequence belongs to the methyltransferase superfamily. RsmH family.

It localises to the cytoplasm. It catalyses the reaction cytidine(1402) in 16S rRNA + S-adenosyl-L-methionine = N(4)-methylcytidine(1402) in 16S rRNA + S-adenosyl-L-homocysteine + H(+). In terms of biological role, specifically methylates the N4 position of cytidine in position 1402 (C1402) of 16S rRNA. In Nitrobacter winogradskyi (strain ATCC 25391 / DSM 10237 / CIP 104748 / NCIMB 11846 / Nb-255), this protein is Ribosomal RNA small subunit methyltransferase H.